The following is a 556-amino-acid chain: Formate--tetrahydrofolate ligase (556 aa).

65–72 (TPAGEGKS) provides a ligand contact to ATP.

This sequence belongs to the formate--tetrahydrofolate ligase family.

The enzyme catalyses (6S)-5,6,7,8-tetrahydrofolate + formate + ATP = (6R)-10-formyltetrahydrofolate + ADP + phosphate. It participates in one-carbon metabolism; tetrahydrofolate interconversion. The protein is Formate--tetrahydrofolate ligase of Natranaerobius thermophilus (strain ATCC BAA-1301 / DSM 18059 / JW/NM-WN-LF).